The primary structure comprises 634 residues: 1-phosphatidylinositol 4,5-bisphosphate phosphodiesterase zeta-1 (634 aa).

Residues 35-70 (CNTIHVKYIFKDNDRLKQGRITIEEFRTIYRIITYR) form the EF-hand domain. The PI-PLC X-box domain occupies 155–299 (QDMTHPLTDY…LKFKILVRNK (145 aa)). Residues H170 and H215 contribute to the active site. Residues 312–345 (GSDMHGKVEEFEEEEEIEQEEDGSGAKEPEPVGD) form a disordered region. Over residues 321 to 334 (EFEEEEEIEQEEDG) the composition is skewed to acidic residues. One can recognise a PI-PLC Y-box domain in the interval 376-492 (LSDLVIYTKV…GYVLKPRFLR (117 aa)). One can recognise a C2 domain in the interval 492-615 (RDKKTKFNPH…RGYRRVPLFS (124 aa)).

In terms of assembly, interacts (via its C2 domain) with PtdIns(3)P and, to a lesser extent, PtdIns(5)P in vitro. Ca(2+) is required as a cofactor.

Its subcellular location is the nucleus. It localises to the cytoplasm. The protein localises to the perinuclear region. The catalysed reaction is a 1,2-diacyl-sn-glycero-3-phospho-(1D-myo-inositol-4,5-bisphosphate) + H2O = 1D-myo-inositol 1,4,5-trisphosphate + a 1,2-diacyl-sn-glycerol + H(+). Its function is as follows. The production of the second messenger molecules diacylglycerol (DAG) and inositol 1,4,5-trisphosphate (IP3) is mediated by activated phosphatidylinositol-specific phospholipase C enzymes. In vitro, hydrolyzes PtdIns(4,5)P2 in a Ca(2+)-dependent manner. Triggers intracellular Ca(2+) oscillations in oocytes solely during M phase and is involved in inducing oocyte activation and initiating embryonic development up to the blastocyst stage. Is therefore a strong candidate for the egg-activating soluble sperm factor that is transferred from the sperm into the egg cytoplasm following gamete membrane fusion. May exert an inhibitory effect on phospholipase-C-coupled processes that depend on calcium ions and protein kinase C, including CFTR trafficking and function. This is 1-phosphatidylinositol 4,5-bisphosphate phosphodiesterase zeta-1 from Bos taurus (Bovine).